Consider the following 412-residue polypeptide: Probable ribonuclease FAU-1 (412 aa).

Belongs to the FAU-1 family.

Its function is as follows. Probable RNase involved in rRNA stability through maturation and/or degradation of precursor rRNAs. Binds to RNA in loop regions with AU-rich sequences. The polypeptide is Probable ribonuclease FAU-1 (Sulfurisphaera tokodaii (strain DSM 16993 / JCM 10545 / NBRC 100140 / 7) (Sulfolobus tokodaii)).